We begin with the raw amino-acid sequence, 526 residues long: Peptide chain release factor 3 (526 aa).

Positions 9-277 constitute a tr-type G domain; that stretch reads DKRRTFAIIS…GIVEWAPKPL (269 aa). GTP-binding positions include 18–25, 86–90, and 140–143; these read SHPDAGKT, DTPGH, and NKLD.

The protein belongs to the TRAFAC class translation factor GTPase superfamily. Classic translation factor GTPase family. PrfC subfamily.

Its subcellular location is the cytoplasm. In terms of biological role, increases the formation of ribosomal termination complexes and stimulates activities of RF-1 and RF-2. It binds guanine nucleotides and has strong preference for UGA stop codons. It may interact directly with the ribosome. The stimulation of RF-1 and RF-2 is significantly reduced by GTP and GDP, but not by GMP. This is Peptide chain release factor 3 from Shewanella baltica (strain OS223).